The primary structure comprises 176 residues: Oligoribonuclease (176 aa).

The region spanning 2 to 159 is the Exonuclease domain; sequence EMTGLNPETD…DDILESIEEM (158 aa). The active site involves Tyr-117.

Belongs to the oligoribonuclease family.

Its subcellular location is the cytoplasm. Functionally, 3'-to-5' exoribonuclease specific for small oligoribonucleotides. This Neisseria gonorrhoeae (strain ATCC 700825 / FA 1090) protein is Oligoribonuclease.